A 223-amino-acid polypeptide reads, in one-letter code: RNA-free ribonuclease P (223 aa).

This sequence belongs to the HARP family.

It catalyses the reaction Endonucleolytic cleavage of RNA, removing 5'-extranucleotides from tRNA precursor.. In terms of biological role, RNA-free RNase P that catalyzes the removal of the 5'-leader sequence from pre-tRNA to produce the mature 5'-terminus. The protein is RNA-free ribonuclease P of Methanococcus vannielii (strain ATCC 35089 / DSM 1224 / JCM 13029 / OCM 148 / SB).